Consider the following 178-residue polypeptide: Small ribosomal subunit protein uS5 (178 aa).

The S5 DRBM domain maps to 15-78; that stretch reads FEEKIIEIRR…ADAKKNVIEV (64 aa).

The protein belongs to the universal ribosomal protein uS5 family. As to quaternary structure, part of the 30S ribosomal subunit. Contacts proteins S4 and S8.

With S4 and S12 plays an important role in translational accuracy. In terms of biological role, located at the back of the 30S subunit body where it stabilizes the conformation of the head with respect to the body. The protein is Small ribosomal subunit protein uS5 of Thermotoga neapolitana (strain ATCC 49049 / DSM 4359 / NBRC 107923 / NS-E).